The sequence spans 875 residues: Phosphoenolpyruvate carboxylase (875 aa).

Residues His-137 and Lys-542 contribute to the active site.

The protein belongs to the PEPCase type 1 family. Requires Mg(2+) as cofactor.

The enzyme catalyses oxaloacetate + phosphate = phosphoenolpyruvate + hydrogencarbonate. Its function is as follows. Forms oxaloacetate, a four-carbon dicarboxylic acid source for the tricarboxylic acid cycle. The chain is Phosphoenolpyruvate carboxylase from Pseudomonas putida (strain ATCC 700007 / DSM 6899 / JCM 31910 / BCRC 17059 / LMG 24140 / F1).